The chain runs to 68 residues: Large ribosomal subunit protein uL29 (68 aa).

It belongs to the universal ribosomal protein uL29 family.

This chain is Large ribosomal subunit protein uL29 (rpl29), found in Thermoplasma acidophilum (strain ATCC 25905 / DSM 1728 / JCM 9062 / NBRC 15155 / AMRC-C165).